The primary structure comprises 348 residues: Aspartate carbamoyltransferase catalytic subunit (348 aa).

Positions 57 and 58 each coordinate carbamoyl phosphate. Lys86 is an L-aspartate binding site. Arg107, His135, and Gln138 together coordinate carbamoyl phosphate. The L-aspartate site is built by Arg172 and Arg234. Residues Leu274 and Pro275 each contribute to the carbamoyl phosphate site.

This sequence belongs to the aspartate/ornithine carbamoyltransferase superfamily. ATCase family. As to quaternary structure, heterododecamer (2C3:3R2) of six catalytic PyrB chains organized as two trimers (C3), and six regulatory PyrI chains organized as three dimers (R2).

The enzyme catalyses carbamoyl phosphate + L-aspartate = N-carbamoyl-L-aspartate + phosphate + H(+). It participates in pyrimidine metabolism; UMP biosynthesis via de novo pathway; (S)-dihydroorotate from bicarbonate: step 2/3. Functionally, catalyzes the condensation of carbamoyl phosphate and aspartate to form carbamoyl aspartate and inorganic phosphate, the committed step in the de novo pyrimidine nucleotide biosynthesis pathway. The protein is Aspartate carbamoyltransferase catalytic subunit of Dichelobacter nodosus (strain VCS1703A).